The chain runs to 301 residues: UDP-3-O-acyl-N-acetylglucosamine deacetylase (301 aa).

Zn(2+)-binding residues include H81, H237, and D241. H264 serves as the catalytic Proton donor.

The protein belongs to the LpxC family. Zn(2+) serves as cofactor.

The enzyme catalyses a UDP-3-O-[(3R)-3-hydroxyacyl]-N-acetyl-alpha-D-glucosamine + H2O = a UDP-3-O-[(3R)-3-hydroxyacyl]-alpha-D-glucosamine + acetate. Its pathway is glycolipid biosynthesis; lipid IV(A) biosynthesis; lipid IV(A) from (3R)-3-hydroxytetradecanoyl-[acyl-carrier-protein] and UDP-N-acetyl-alpha-D-glucosamine: step 2/6. Catalyzes the hydrolysis of UDP-3-O-myristoyl-N-acetylglucosamine to form UDP-3-O-myristoylglucosamine and acetate, the committed step in lipid A biosynthesis. This is UDP-3-O-acyl-N-acetylglucosamine deacetylase from Leptospira interrogans serogroup Icterohaemorrhagiae serovar copenhageni (strain Fiocruz L1-130).